Reading from the N-terminus, the 95-residue chain is MPASSKSRTSAVPTIEELIQRLEEITRNIENPDTGLENSIALYEEGMSLAEECRKRLLETRKKLETINPAETARPAKPENAPESPRMNDLFGTES.

A disordered region spans residues 65–95 (ETINPAETARPAKPENAPESPRMNDLFGTES).

Belongs to the XseB family. In terms of assembly, heterooligomer composed of large and small subunits.

It localises to the cytoplasm. The enzyme catalyses Exonucleolytic cleavage in either 5'- to 3'- or 3'- to 5'-direction to yield nucleoside 5'-phosphates.. Its function is as follows. Bidirectionally degrades single-stranded DNA into large acid-insoluble oligonucleotides, which are then degraded further into small acid-soluble oligonucleotides. The polypeptide is Exodeoxyribonuclease 7 small subunit (Chlorobaculum tepidum (strain ATCC 49652 / DSM 12025 / NBRC 103806 / TLS) (Chlorobium tepidum)).